A 241-amino-acid polypeptide reads, in one-letter code: Histone H1-II (241 aa).

Over residues 1–10 (MASDAPEVKA) the composition is skewed to basic and acidic residues. 2 disordered regions span residues 1-27 (MASDAPEVKAPKAKTQKKPKTAPTHPP) and 89-241 (NSYK…AKKA). The span at 11-20 (PKAKTQKKPK) shows a compositional bias: basic residues. Positions 24–95 (THPPYIQMVT…KVKNSYKLSD (72 aa)) constitute an H15 domain. Residues 99–111 (SKAKAAAKPKAAP) show a composition bias toward basic residues. A run of 3 repeats spans residues 111–116 (PKKAAA), 117–122 (PKKAAA), and 123–128 (PKKAKA). Residues 111–217 (PKKAAAPKKA…KAATPKKAKA (107 aa)) form an 8 X 6 AA repeats of P-K-K-A-[AK]-A region. Over residues 129-155 (PKKEGEKKAVKPKSEKKAAKPKTEKKP) the composition is skewed to basic and acidic residues. 2 stretches are compositionally biased toward basic residues: residues 156–184 (KAAKKPKAAKKPAAKKPAAKKPAAKKATP) and 194–241 (AAPK…AKKA). Residues 183–186 (TPKK) mediate DNA binding. Tandem repeats lie at residues 184 to 189 (PKKAAA), 190 to 195 (PKKAAA), 196 to 201 (PKKAKA), 204 to 209 (PKKAKA), and 212 to 217 (PKKAKA). DNA-binding regions lie at residues 203–206 (TPKK) and 211–214 (TPKK).

It belongs to the histone H1/H5 family.

The protein resides in the nucleus. It localises to the chromosome. Its function is as follows. Histones H1 are necessary for the condensation of nucleosome chains into higher-order structures. This Volvox carteri (Green alga) protein is Histone H1-II (H1-II).